The following is a 266-amino-acid chain: Phosphatidylglycerol--prolipoprotein diacylglyceryl transferase (266 aa).

Helical transmembrane passes span 10–30, 56–76, 92–112, 120–140, 171–191, 199–219, and 233–253; these read VALAIGPLKIHWYGLMYLIGI, LVFWVACGVILGGRLGYVLFY, WKGGMSFHGGLLGVMLAVWWF, FFQLMDFIAPLVPIGLGAGRI, PSQLYQFALEGVALFVILWLF, ASVSGLFVLCYGIFRFVVEFV, and WLTMGQVLCVPMVLAGIALMV. Arginine 139 is an a 1,2-diacyl-sn-glycero-3-phospho-(1'-sn-glycerol) binding site.

This sequence belongs to the Lgt family.

It is found in the cell inner membrane. The enzyme catalyses L-cysteinyl-[prolipoprotein] + a 1,2-diacyl-sn-glycero-3-phospho-(1'-sn-glycerol) = an S-1,2-diacyl-sn-glyceryl-L-cysteinyl-[prolipoprotein] + sn-glycerol 1-phosphate + H(+). The protein operates within protein modification; lipoprotein biosynthesis (diacylglyceryl transfer). Functionally, catalyzes the transfer of the diacylglyceryl group from phosphatidylglycerol to the sulfhydryl group of the N-terminal cysteine of a prolipoprotein, the first step in the formation of mature lipoproteins. This is Phosphatidylglycerol--prolipoprotein diacylglyceryl transferase from Pseudomonas paraeruginosa (strain DSM 24068 / PA7) (Pseudomonas aeruginosa (strain PA7)).